The primary structure comprises 340 residues: Heat-inducible transcription repressor HrcA (340 aa).

This sequence belongs to the HrcA family.

In terms of biological role, negative regulator of class I heat shock genes (grpE-dnaK-dnaJ and groELS operons). Prevents heat-shock induction of these operons. In Burkholderia vietnamiensis (strain G4 / LMG 22486) (Burkholderia cepacia (strain R1808)), this protein is Heat-inducible transcription repressor HrcA.